The following is a 942-amino-acid chain: PH and SEC7 domain-containing protein C11E3.11c (942 aa).

A compositionally biased stretch (polar residues) spans 1 to 18; it reads MSRNASNAYLKNGNSTPS. Disordered regions lie at residues 1–128 and 259–308; these read MSRN…TRLN and SRNL…ETTR. The span at 24–40 shows a compositional bias: low complexity; it reads PSSLSQRSKTSTRSSKP. 4 stretches are compositionally biased toward polar residues: residues 50–60, 90–125, 271–284, and 292–305; these read WFKNESSSRHP, ASMSTNDLPSHPRSQSVMGFSSSTSQLTGTSNSSRT, YGNSRTPLRDSSNY, and NRQSSLSIPKSTSE. The 203-residue stretch at 295–497 folds into the SEC7 domain; sequence SSLSIPKSTS…LSSYKSFASN (203 aa). Residues 681–804 form the PH domain; that stretch reads PYIKQGILKF…WIDALNYWAA (124 aa).

The protein is PH and SEC7 domain-containing protein C11E3.11c of Schizosaccharomyces pombe (strain 972 / ATCC 24843) (Fission yeast).